The primary structure comprises 541 residues: 5' exonuclease Apollo (541 aa).

Lys334 is covalently cross-linked (Glycyl lysine isopeptide (Lys-Gly) (interchain with G-Cter in SUMO2)). Disordered regions lie at residues 350 to 375 and 450 to 489; these read TQGV…KKHK and IGLG…TTHL. Residues 358 to 371 show a composition bias toward basic and acidic residues; sequence PEEKADQVKVDRDS. The short motif at 492–507 is the TBM element; sequence ESGGLALKYLLTPVDF.

Belongs to the DNA repair metallo-beta-lactamase (DRMBL) family. Interacts with TERF2; the interaction is direct. Interacts with MUS81, MRE11 and FANCD2. Interacts with HSPA2, HSPA8 and HSPA14. Interacts with SPAG5. In terms of processing, ubiquitinated, leading to its degradation. Interaction with TERF2 protects it from ubiquitination.

Its subcellular location is the chromosome. The protein resides in the telomere. It localises to the nucleus. The protein localises to the cytoplasm. It is found in the cytoskeleton. Its subcellular location is the microtubule organizing center. The protein resides in the centrosome. The catalysed reaction is a beta-lactam + H2O = a substituted beta-amino acid. 5'-3' exonuclease that plays a central role in telomere maintenance and protection during S-phase. Participates in the protection of telomeres against non-homologous end-joining (NHEJ)-mediated repair, thereby ensuring that telomeres do not fuse. Plays a key role in telomeric loop (T loop) formation by being recruited by TERF2 at the leading end telomeres and by processing leading-end telomeres immediately after their replication via its exonuclease activity: generates 3' single-stranded overhang at the leading end telomeres avoiding blunt leading-end telomeres that are vulnerable to end-joining reactions and expose the telomere end in a manner that activates the DNA repair pathways. Together with TERF2, required to protect telomeres from replicative damage during replication by controlling the amount of DNA topoisomerase (TOP1, TOP2A and TOP2B) needed for telomere replication during fork passage and prevent aberrant telomere topology. Also involved in response to DNA damage: plays a role in response to DNA interstrand cross-links (ICLs) by facilitating double-strand break formation. In case of spindle stress, involved in prophase checkpoint. Possesses beta-lactamase activity, catalyzing the hydrolysis of penicillin G and nitrocefin. Exhibits no activity towards other beta-lactam antibiotic classes including cephalosporins (cefotaxime) and carbapenems (imipenem). The chain is 5' exonuclease Apollo (Dclre1b) from Rattus norvegicus (Rat).